A 344-amino-acid chain; its full sequence is tRNA N6-adenosine threonylcarbamoyltransferase (344 aa).

Histidine 113 and histidine 117 together coordinate Fe cation. Residues 135 to 139, aspartate 169, glycine 182, aspartate 186, and asparagine 278 contribute to the substrate site; that span reads LVSGG. Position 306 (aspartate 306) interacts with Fe cation. The disordered stretch occupies residues 325–344; sequence ESPISVGTDPSLSVETPQVF. The segment covering 326-344 has biased composition (polar residues); that stretch reads SPISVGTDPSLSVETPQVF.

Belongs to the KAE1 / TsaD family. The cofactor is Fe(2+).

Its subcellular location is the cytoplasm. It catalyses the reaction L-threonylcarbamoyladenylate + adenosine(37) in tRNA = N(6)-L-threonylcarbamoyladenosine(37) in tRNA + AMP + H(+). Functionally, required for the formation of a threonylcarbamoyl group on adenosine at position 37 (t(6)A37) in tRNAs that read codons beginning with adenine. Is involved in the transfer of the threonylcarbamoyl moiety of threonylcarbamoyl-AMP (TC-AMP) to the N6 group of A37, together with TsaE and TsaB. TsaD likely plays a direct catalytic role in this reaction. This is tRNA N6-adenosine threonylcarbamoyltransferase from Corynebacterium glutamicum (strain ATCC 13032 / DSM 20300 / JCM 1318 / BCRC 11384 / CCUG 27702 / LMG 3730 / NBRC 12168 / NCIMB 10025 / NRRL B-2784 / 534).